The sequence spans 91 residues: DNA-binding protein HU (91 aa).

This sequence belongs to the bacterial histone-like protein family.

Its function is as follows. Histone-like DNA-binding protein which is capable of wrapping DNA to stabilize it, and thus to prevent its denaturation under extreme environmental conditions. Also seems to act as a fortuitous virulence factor in delayed sequelae by binding to heparan sulfate-proteoglycans in the extracellular matrix of target organs and acting as a nidus for in situ immune complex formation. The chain is DNA-binding protein HU (hup) from Streptococcus pyogenes serotype M1.